We begin with the raw amino-acid sequence, 164 residues long: MLIMGVDPGTAITGYGIVEYAGNRFALVECGCIRTMPGVPPAERLQALYGELVEIIKRHRPEHFAVEEIFFNKNTRTALTVGQARGVTVLAAAQSGLPVFEYTPLQVKQAVAGFGRAGKTQVQYMVKTILALPEVPAPDDVADALAVAICHAHHYTWERKLKLK.

Catalysis depends on residues Asp-7, Glu-67, and Asp-140. The Mg(2+) site is built by Asp-7, Glu-67, and Asp-140.

It belongs to the RuvC family. Homodimer which binds Holliday junction (HJ) DNA. The HJ becomes 2-fold symmetrical on binding to RuvC with unstacked arms; it has a different conformation from HJ DNA in complex with RuvA. In the full resolvosome a probable DNA-RuvA(4)-RuvB(12)-RuvC(2) complex forms which resolves the HJ. Mg(2+) serves as cofactor.

The protein resides in the cytoplasm. It carries out the reaction Endonucleolytic cleavage at a junction such as a reciprocal single-stranded crossover between two homologous DNA duplexes (Holliday junction).. The RuvA-RuvB-RuvC complex processes Holliday junction (HJ) DNA during genetic recombination and DNA repair. Endonuclease that resolves HJ intermediates. Cleaves cruciform DNA by making single-stranded nicks across the HJ at symmetrical positions within the homologous arms, yielding a 5'-phosphate and a 3'-hydroxyl group; requires a central core of homology in the junction. The consensus cleavage sequence is 5'-(A/T)TT(C/G)-3'. Cleavage occurs on the 3'-side of the TT dinucleotide at the point of strand exchange. HJ branch migration catalyzed by RuvA-RuvB allows RuvC to scan DNA until it finds its consensus sequence, where it cleaves and resolves the cruciform DNA. The polypeptide is Crossover junction endodeoxyribonuclease RuvC (Pelotomaculum thermopropionicum (strain DSM 13744 / JCM 10971 / SI)).